We begin with the raw amino-acid sequence, 327 residues long: D-alanine--D-alanine ligase (327 aa).

An ATP-grasp domain is found at 113 to 312 (KRLWMTHGLA…YEDFVLQVLA (200 aa)). Position 139–194 (139–194 (VADLGLPLIVKPAREGSSIGLTKVTAADQMRAAFDKAAALDNDVIAETFVDGAELT)) interacts with ATP. Mg(2+) contacts are provided by Asp266, Glu279, and Asn281.

This sequence belongs to the D-alanine--D-alanine ligase family. The cofactor is Mg(2+). It depends on Mn(2+) as a cofactor.

It localises to the cytoplasm. It catalyses the reaction 2 D-alanine + ATP = D-alanyl-D-alanine + ADP + phosphate + H(+). It participates in cell wall biogenesis; peptidoglycan biosynthesis. Cell wall formation. The polypeptide is D-alanine--D-alanine ligase (Cupriavidus taiwanensis (strain DSM 17343 / BCRC 17206 / CCUG 44338 / CIP 107171 / LMG 19424 / R1) (Ralstonia taiwanensis (strain LMG 19424))).